The sequence spans 442 residues: ATP-dependent RNA helicase SUB2-2 (442 aa).

Residues 58–86 carry the Q motif motif; that stretch reads TGFKDFLLKPELARAIIDCGFEHPSEVQQ. One can recognise a Helicase ATP-binding domain in the interval 89–264; sequence IPQSIHGTDV…RRFLQNPLEI (176 aa). An ATP-binding site is contributed by 102 to 109; that stretch reads AKSGLGKT. The short motif at 211–214 is the DECD box element; sequence DECD. Residues 292–437 form the Helicase C-terminal domain; the sequence is KLAQLLDDLE…EFPEEGIDPS (146 aa).

Belongs to the DEAD box helicase family. DECD subfamily.

It localises to the nucleus. It carries out the reaction ATP + H2O = ADP + phosphate + H(+). In terms of biological role, ATP-binding RNA helicase involved in transcription elongation and required for the export of mRNA out of the nucleus. SUB2 also plays a role in pre-mRNA splicing and spliceosome assembly. May be involved in rDNA and telomeric silencing, and maintenance of genome integrity. The sequence is that of ATP-dependent RNA helicase SUB2-2 (SUB2-2) from Vanderwaltozyma polyspora (strain ATCC 22028 / DSM 70294 / BCRC 21397 / CBS 2163 / NBRC 10782 / NRRL Y-8283 / UCD 57-17) (Kluyveromyces polysporus).